A 306-amino-acid chain; its full sequence is MQKIIVLIGPTGIGKTDLALDLAPKINAEIISGDSMQIYQEVSIGTAKPTDEELKRVKHYLINQRSIFEEYSVKDFVAEGTKAVDKIVADGAIPLVVGGTGFYINALVNQLQLGEPGEYQTSVDPQWEEYLKENGENKLWDLLQAKDPAAAEKIAPQNSRRSLRALTVISRTGKLFSEQQQKINPRYDALILGLNSDREEVYQRINMRVDKMMEHGLLQEAKFVYENRSREHQVIQAIGYKEFFPYFSGEKTLDECVNKLKQASRKYAKRQLTYFKHQLPVVWLDPLQDEKVSEKALRKINEFLNK.

Residue 9–16 (GPTGIGKT) coordinates ATP. 11–16 (TGIGKT) contacts substrate. The interaction with substrate tRNA stretch occupies residues 34–37 (DSMQ).

Belongs to the IPP transferase family. Monomer. Mg(2+) is required as a cofactor.

The catalysed reaction is adenosine(37) in tRNA + dimethylallyl diphosphate = N(6)-dimethylallyladenosine(37) in tRNA + diphosphate. Its function is as follows. Catalyzes the transfer of a dimethylallyl group onto the adenine at position 37 in tRNAs that read codons beginning with uridine, leading to the formation of N6-(dimethylallyl)adenosine (i(6)A). The chain is tRNA dimethylallyltransferase from Lactobacillus johnsonii (strain CNCM I-12250 / La1 / NCC 533).